Consider the following 154-residue polypeptide: uncharacterized protein (154 aa).

The next 2 helical transmembrane spans lie at 19-39 (LFAYAAAFLIAVAHVAGGLLL) and 51-71 (ADQVAMGALGLVLAGAVLLFA).

It is found in the cell membrane. This is an uncharacterized protein from Mycobacterium tuberculosis (strain CDC 1551 / Oshkosh).